Here is a 438-residue protein sequence, read N- to C-terminus: tRNA-2-methylthio-N(6)-dimethylallyladenosine synthase (438 aa).

The MTTase N-terminal domain occupies 2–118 (KSFYLETFGC…LADMVRDAEL (117 aa)). [4Fe-4S] cluster is bound by residues Cys-11, Cys-47, Cys-81, Cys-157, Cys-161, and Cys-164. Positions 143–373 (PSAEVSRFVT…LALQEEITRQ (231 aa)) constitute a Radical SAM core domain. The TRAM domain maps to 376-438 (QMDIGQVLPV…YRNSHLGERV (63 aa)).

Belongs to the methylthiotransferase family. MiaB subfamily. Monomer. [4Fe-4S] cluster serves as cofactor.

It is found in the cytoplasm. It carries out the reaction N(6)-dimethylallyladenosine(37) in tRNA + (sulfur carrier)-SH + AH2 + 2 S-adenosyl-L-methionine = 2-methylsulfanyl-N(6)-dimethylallyladenosine(37) in tRNA + (sulfur carrier)-H + 5'-deoxyadenosine + L-methionine + A + S-adenosyl-L-homocysteine + 2 H(+). In terms of biological role, catalyzes the methylthiolation of N6-(dimethylallyl)adenosine (i(6)A), leading to the formation of 2-methylthio-N6-(dimethylallyl)adenosine (ms(2)i(6)A) at position 37 in tRNAs that read codons beginning with uridine. The chain is tRNA-2-methylthio-N(6)-dimethylallyladenosine synthase from Syntrophotalea carbinolica (strain DSM 2380 / NBRC 103641 / GraBd1) (Pelobacter carbinolicus).